We begin with the raw amino-acid sequence, 141 residues long: Large ribosomal subunit protein uL16m (141 aa).

The protein belongs to the universal ribosomal protein uL16 family.

The protein localises to the mitochondrion. This Acanthamoeba castellanii (Amoeba) protein is Large ribosomal subunit protein uL16m (RPL16).